Here is a 316-residue protein sequence, read N- to C-terminus: Fe-S cluster assembly protein DRE2 (316 aa).

The tract at residues 4–156 (SMPVATTVAA…KPQHVASTSV (153 aa)) is N-terminal SAM-like domain. The linker stretch occupies residues 157-202 (PLKSRQPGALLNRKKTDPAKKQALWALSSPSTPKIDPEALLTAEDK). Cysteine 209, cysteine 223, cysteine 226, and cysteine 228 together coordinate [2Fe-2S] cluster. The tract at residues 209 to 228 (CEPVRSSAPRRKKACKSCSC) is fe-S binding site A. Positions 279, 282, 290, and 293 each coordinate [4Fe-4S] cluster. 2 short sequence motifs (cx2C motif) span residues 279–282 (CGSC) and 290–293 (CAGC). Positions 279–293 (CGSCFLGDAFRCAGC) are fe-S binding site B.

The protein belongs to the anamorsin family. Monomer. Interacts with TAH18. Interacts with MIA40. It depends on [2Fe-2S] cluster as a cofactor. The cofactor is [4Fe-4S] cluster.

The protein localises to the cytoplasm. The protein resides in the mitochondrion intermembrane space. Functionally, component of the cytosolic iron-sulfur (Fe-S) protein assembly (CIA) machinery required for the maturation of extramitochondrial Fe-S proteins. Part of an electron transfer chain functioning in an early step of cytosolic Fe-S biogenesis, facilitating the de novo assembly of a [4Fe-4S] cluster on the scaffold complex CFD1-NBP35. Electrons are transferred to DRE2 from NADPH via the FAD- and FMN-containing protein TAH18. TAH18-DRE2 are also required for the assembly of the diferric tyrosyl radical cofactor of ribonucleotide reductase (RNR), probably by providing electrons for reduction during radical cofactor maturation in the catalytic small subunit RNR2. The protein is Fe-S cluster assembly protein DRE2 of Laccaria bicolor (strain S238N-H82 / ATCC MYA-4686) (Bicoloured deceiver).